A 194-amino-acid chain; its full sequence is Protein GrpE (194 aa).

Basic and acidic residues-rich tracts occupy residues 1–19 (MSKE…ENTS) and 26–44 (KKEA…NQKL). The segment at 1–44 (MSKEEFPSEKNLDKEENTSKPKKAVKKEAAKGEETKKNNENQKL) is disordered.

Belongs to the GrpE family. Homodimer.

It is found in the cytoplasm. In terms of biological role, participates actively in the response to hyperosmotic and heat shock by preventing the aggregation of stress-denatured proteins, in association with DnaK and GrpE. It is the nucleotide exchange factor for DnaK and may function as a thermosensor. Unfolded proteins bind initially to DnaJ; upon interaction with the DnaJ-bound protein, DnaK hydrolyzes its bound ATP, resulting in the formation of a stable complex. GrpE releases ADP from DnaK; ATP binding to DnaK triggers the release of the substrate protein, thus completing the reaction cycle. Several rounds of ATP-dependent interactions between DnaJ, DnaK and GrpE are required for fully efficient folding. The polypeptide is Protein GrpE (Lactobacillus acidophilus (strain ATCC 700396 / NCK56 / N2 / NCFM)).